A 228-amino-acid chain; its full sequence is Demethylmenaquinone methyltransferase (228 aa).

S-adenosyl-L-methionine is bound by residues T62, D80, D100 to A101, and S117.

The protein belongs to the class I-like SAM-binding methyltransferase superfamily. MenG/UbiE family.

The catalysed reaction is a 2-demethylmenaquinol + S-adenosyl-L-methionine = a menaquinol + S-adenosyl-L-homocysteine + H(+). It participates in quinol/quinone metabolism; menaquinone biosynthesis; menaquinol from 1,4-dihydroxy-2-naphthoate: step 2/2. Functionally, methyltransferase required for the conversion of demethylmenaquinol (DMKH2) to menaquinol (MKH2). The protein is Demethylmenaquinone methyltransferase of Mycolicibacterium vanbaalenii (strain DSM 7251 / JCM 13017 / BCRC 16820 / KCTC 9966 / NRRL B-24157 / PYR-1) (Mycobacterium vanbaalenii).